We begin with the raw amino-acid sequence, 1241 residues long: MMPHPVQLGKKTRMSYSQIDEVLEMPNLIDLQKDSYQWFLDEGLKEVFDDVSPIEDYTGNLILEFVDYSLDENPKYNIEDSKERDVTYAAPLKVKVRLINKTTGEVKEQEVFMGDFPLMTDTGTFIINGAERVIVNQLVRSPGVYYSREFDKTGKQLFSATVIPNRGAWLEYETDSNDIVSVRIDRTRKQPVTVLLRALGYGSDAQIKELLGEDERLLATLEKDSTKTTDEALLEIYKKLRPGEPPTVENAKSLLRTLFFDPKRYDLAKVGRYKFNKKLSLANRILGKKAAANIVDPSTGEILVEEGTKIDRETSIMVQDSGINEVFIYAEDNKVIKVLGNHFVNINKHIPFNIEELKISDKVYYPVLKEILDTFSQEEDIRDALKERAKELSPKHIIIADIIASISYEFNLAHDTGNIDDIDHLGNRRSRSVGELLQNQFRIGLSRMERVVKERMTIQDVDLATPQALINIRPVAAAIKEFFGSSQLSQFMDQNNPLSELTHKRRLSALGPGGLSRERAGFEVRDVHNSHYGRMCPIETPEGPNIGLINTLSTYARVNEYGFIESPYRKVDKKRGVVTNVIEYLTADEEDLLVIAQANEPLDEEGRFVNKRIACRMQFGAIDIAPANEVDYMDVSPKQVVSVATAMIPFLENDDANRALMGANMQRQAVPLLITDAPIIGTGMEYQSAKDSGVVILAKHDGVIDRLSSNEIVIKRDKDGQKDRYKLLKFKRSNQGTCINQRPIVSKGERVKAGDVIADGPSTNQGEIALGRNCLIGFMTWEGYNYEDAILINEKLVKEDSLTSIHIEEYEAEARDTKLGPEEITRDIPNVGEEALKDLDERGIIRIGAEVQSGDILVGKVTPKGETELTAEERLLRAIFGEKAREVRDTSLKVPHGESGIIVDIKVFSRENGDELPPGVNELVRAYIAQKRKINVGDKMAGRHGNKGVISRVLPAEDMPFLADGTPLEIVLNPLGVPSRMNIGQVLEVHLGLAAKSLGWNVATPVFDGANEHDIMDALEMAGFSRSGKVKLYDGRTGEPFDNDVTVGYMYMLKLHHLVDDKIHARSTGPYSLVTQQPLGGKAQFGGQRFGEMEVWALEAYGAAHTLQEILTVKSDDVVGRVKTYECIVKGENIPEPGVPESFKVLIKELQSLCLDVKVLTEEDSEIEIKESVEDDSGELSIEYGDLTYEADGELEIIEPAEEEQDTDVDYITEDDFESPDPEIDFDEKYLEDDFNSYDDF.

The interval 1201–1224 (AEEEQDTDVDYITEDDFESPDPEI) is disordered.

The protein belongs to the RNA polymerase beta chain family. In terms of assembly, the RNAP catalytic core consists of 2 alpha, 1 beta, 1 beta' and 1 omega subunit. When a sigma factor is associated with the core the holoenzyme is formed, which can initiate transcription.

The catalysed reaction is RNA(n) + a ribonucleoside 5'-triphosphate = RNA(n+1) + diphosphate. Functionally, DNA-dependent RNA polymerase catalyzes the transcription of DNA into RNA using the four ribonucleoside triphosphates as substrates. The chain is DNA-directed RNA polymerase subunit beta from Alkaliphilus oremlandii (strain OhILAs) (Clostridium oremlandii (strain OhILAs)).